A 446-amino-acid polypeptide reads, in one-letter code: Probable E3 ubiquitin-protein ligase XBOS31 (446 aa).

5 ANK repeats span residues 46–75 (DRFTALHIAAANGRLQVLSMLLDRDGDVDV), 79–108 (KKQTPLMVAAMRGNTECVVRLLRGGANVLT), 113–142 (RARTCLHHAAYYGHAECLQAILGAAAQAQG), 160–189 (RGATPLHLAARHARASCVRLLLDKGAIVSA), and 197–227 (PGSTALHLAARAGSMECIRELLAWGADRLQR). The segment at 317–366 (CNICFEQACSMEVKECGHQMCAACTLAICCHSKPNPKTLLLHPPACPFCR) adopts an RING-type zinc-finger fold. Residues 376–401 (TTNSNKTNSRRRSRSRSSSFKGGLSS) form a disordered region.

The enzyme catalyses S-ubiquitinyl-[E2 ubiquitin-conjugating enzyme]-L-cysteine + [acceptor protein]-L-lysine = [E2 ubiquitin-conjugating enzyme]-L-cysteine + N(6)-ubiquitinyl-[acceptor protein]-L-lysine.. It participates in protein modification; protein ubiquitination. In Oryza sativa subsp. japonica (Rice), this protein is Probable E3 ubiquitin-protein ligase XBOS31 (XBOS31).